The chain runs to 1740 residues: SH3 and multiple ankyrin repeat domains protein 3 (1740 aa).

The intramolecular interaction with the ANK repeats stretch occupies residues 1–75 (MDGPGASAVV…KFLDEERLLQ (75 aa)). A Phosphotyrosine modification is found at Tyr-122. ANK repeat units lie at residues 148 to 181 (SGEC…FRTR), 182 to 214 (DGLT…YKDS), 215 to 245 (RGLT…QLGT), 249 to 278 (NGWQ…NMGA), 282 to 311 (SGNT…NKDV), and 315 to 345 (NSQT…DVVP). Positions 354–466 (KRRRLAGPSG…PPPRGPKRKL (113 aa)) are disordered. Residues Ser-373, Ser-375, Ser-387, and Ser-394 each carry the phosphoserine modification. Residues 404–415 (LQEEKDRDRDGE) are compositionally biased toward basic and acidic residues. Positions 444 to 460 (APGPGPASPAPPAPPPR) are enriched in pro residues. The region spanning 470–529 (VPGRKFIAVKAHSPQGEGEIPLHRGEAVKVLSIGEGGFWEGTVKGRTGWFPADCVEEVQM) is the SH3 domain. Ser-482 bears the Phosphoserine mark. A Phosphotyrosine modification is found at Tyr-555. A PDZ domain is found at 570-664 (VAILQKRDHE…RLVMKVVSVT (95 aa)). Positions 664–687 (TRKPEEDSARRRAPPPPKRAPSTT) are disordered. The interval 677 to 684 (PPPPKRAP) is required for interaction with ABI1. Ser-694, Ser-781, Ser-790, and Ser-801 each carry phosphoserine. 5 disordered regions span residues 759–855 (RQGL…RSSF), 868–1053 (AGLY…QPSR), 1115–1199 (AARE…MILS), 1211–1463 (LIVV…GPAR), and 1476–1518 (GDPV…EPVG). A compositionally biased stretch (pro residues) spans 812-845 (IPPPPQTAPPPPPAPYYFDSGPPPTFSPPPPPPG). A phosphoserine mark is found at Ser-891 and Ser-898. Residue Thr-913 is modified to Phosphothreonine. Tyr-931 bears the Phosphotyrosine mark. The residue at position 966 (Arg-966) is an Asymmetric dimethylarginine. The segment covering 1017–1027 (VKERRLEERRR) has biased composition (basic and acidic residues). Polar residues predominate over residues 1123 to 1132 (SQTPSRSPTP). Thr-1131 carries the phosphothreonine modification. 4 positions are modified to phosphoserine: Ser-1135, Ser-1160, Ser-1164, and Ser-1167. A compositionally biased stretch (basic and acidic residues) spans 1175–1195 (ARREAEKPTREERKSPEDKKS). Thr-1235 is subject to Phosphothreonine. Composition is skewed to pro residues over residues 1252-1262 (MPSPRAQPPGS) and 1322-1334 (TPPP…PTTV). The residue at position 1254 (Ser-1254) is a Phosphoserine. Residues 1335–1344 (PSPASGKPSS) are compositionally biased toward low complexity. A compositionally biased stretch (basic and acidic residues) spans 1361–1371 (ADTRSSSDPHL). Residues 1372 to 1393 (ETTSTISTVSSMSTLSSESGEL) show a composition bias toward low complexity. Residues 1411–1417 (PPVPPKP) carry the SH3-binding motif. Ser-1421 carries the phosphoserine modification. Positions 1495 to 1515 (ISELSSRLQQLNKDTRSLGEE) form a coiled coil. Residues 1496-1506 (SELSSRLQQLN) show a composition bias toward polar residues. Phosphoserine occurs at positions 1511, 1522, 1530, and 1549. Disordered regions lie at residues 1556-1594 (ISAQ…PASL) and 1637-1673 (VRSV…QQKP). Residues 1637–1647 (VRSVSARSRSP) show a composition bias toward low complexity. Phosphoserine is present on residues Ser-1644, Ser-1646, and Ser-1648. Pro residues predominate over residues 1648–1658 (SPSPLPSPSPG). Residues 1659–1668 (SGPSAGPRRP) show a composition bias toward low complexity. Residues 1677 to 1740 (WSKFDVGDWL…ERALRQLDGS (64 aa)) enclose the SAM domain.

This sequence belongs to the SHANK family. As to quaternary structure, may homomultimerize via its SAM domain. Interacts with BAIAP2, DBNL and SLC17A7/VGLUT1. Interacts with DLGAP1/GKAP, GRM1/MGLUR1, GRM5/MGLUR5 and LZTS3 C-termini via its PDZ domain. Interacts with ABI1, HOMER1, HOMER2, HOMER3 and CTTN/cortactin SH3 domain. Is part of a complex with DLG4/PSD-95 and DLGAP1/GKAP. Interacts (via PDZ domain) with the GRIA1 subunit of the AMPA receptor (via PDZ-binding motif). Interacts with WASF1 and CYFIP2; the interactions mediate the association of SHANK3 with the WAVE1 complex. Interacts with ARPC2; the interaction probably mediates the association of SHANK3 with the Arp2/3 complex. Interacts (via ANK repeats) with SHARPIN and SPTAN1. Interacts (via PDZ domain) with ARHGAP44 (probably via PDZ-binding motif); the interaction takes place in dendritic spines and promotes GRIA1 exocytosis. Interacts with CAMK2A. Interacts with DIP2A. Interacts with ADGRL3. As to expression, widely expressed in brain (at protein level).

The protein resides in the cytoplasm. Its subcellular location is the postsynaptic density. It is found in the cell projection. The protein localises to the dendritic spine. Its function is as follows. Major scaffold postsynaptic density protein which interacts with multiple proteins and complexes to orchestrate the dendritic spine and synapse formation, maturation and maintenance. Interconnects receptors of the postsynaptic membrane including NMDA-type and metabotropic glutamate receptors via complexes with GKAP/PSD-95 and HOMER, respectively, and the actin-based cytoskeleton. Plays a role in the structural and functional organization of the dendritic spine and synaptic junction through the interaction with Arp2/3 and WAVE1 complex as well as the promotion of the F-actin clusters. By way of this control of actin dynamics, participates in the regulation of developing neurons growth cone motility and the NMDA receptor-signaling. Also modulates GRIA1 exocytosis and GRM5/MGLUR5 expression and signaling to control the AMPA and metabotropic glutamate receptor-mediated synaptic transmission and plasticity. May be required at an early stage of synapse formation and be inhibited by IGF1 to promote synapse maturation. This is SH3 and multiple ankyrin repeat domains protein 3 (Shank3) from Rattus norvegicus (Rat).